Consider the following 354-residue polypeptide: Probable cinnamyl alcohol dehydrogenase 1 (354 aa).

Residues Cys-47, His-69, Glu-70, Cys-100, Cys-103, Cys-106, Cys-114, and Cys-163 each coordinate Zn(2+). NADP(+) is bound by residues Thr-167, Gly-188 to Gly-193, Ser-211 to Lys-216, Thr-251, and Ser-297 to Thr-299.

This sequence belongs to the zinc-containing alcohol dehydrogenase family. In terms of assembly, homodimer. It depends on Zn(2+) as a cofactor.

It catalyses the reaction (E)-cinnamyl alcohol + NADP(+) = (E)-cinnamaldehyde + NADPH + H(+). It carries out the reaction (E)-coniferol + NADP(+) = (E)-coniferaldehyde + NADPH + H(+). The enzyme catalyses (E)-sinapyl alcohol + NADP(+) = (E)-sinapaldehyde + NADPH + H(+). The catalysed reaction is (E)-4-coumaroyl alcohol + NADP(+) = (E)-4-coumaraldehyde + NADPH + H(+). It catalyses the reaction (E)-caffeyl alcohol + NADP(+) = (E)-caffeyl aldehyde + NADPH + H(+). The protein operates within aromatic compound metabolism; phenylpropanoid biosynthesis. Its function is as follows. Involved in lignin biosynthesis. Catalyzes the final step specific for the production of lignin monomers. Catalyzes the NADPH-dependent reduction of coniferaldehyde, 5-hydroxyconiferaldehyde, sinapaldehyde, 4-coumaraldehyde and caffeyl aldehyde to their respective alcohols. The polypeptide is Probable cinnamyl alcohol dehydrogenase 1 (Oryza sativa subsp. japonica (Rice)).